A 356-amino-acid chain; its full sequence is Homoserine O-acetyltransferase (356 aa).

Residues 49-337 (VLICHALTGS…KSTHGHDAFL (289 aa)) form the AB hydrolase-1 domain. S143 serves as the catalytic Nucleophile. R212 is a binding site for substrate. Active-site residues include D304 and H333. D334 lines the substrate pocket.

This sequence belongs to the AB hydrolase superfamily. MetX family. As to quaternary structure, homodimer.

The protein localises to the cytoplasm. It catalyses the reaction L-homoserine + acetyl-CoA = O-acetyl-L-homoserine + CoA. It functions in the pathway amino-acid biosynthesis; L-methionine biosynthesis via de novo pathway; O-acetyl-L-homoserine from L-homoserine: step 1/1. Functionally, transfers an acetyl group from acetyl-CoA to L-homoserine, forming acetyl-L-homoserine. The chain is Homoserine O-acetyltransferase from Nostoc punctiforme (strain ATCC 29133 / PCC 73102).